Reading from the N-terminus, the 175-residue chain is Ribosome maturation factor RimM (175 aa).

The region spanning 96-175 is the PRC barrel domain; it reads EGDFYWHDLI…TIEVDWDAGF (80 aa).

This sequence belongs to the RimM family. Binds ribosomal protein uS19.

It localises to the cytoplasm. Functionally, an accessory protein needed during the final step in the assembly of 30S ribosomal subunit, possibly for assembly of the head region. Essential for efficient processing of 16S rRNA. May be needed both before and after RbfA during the maturation of 16S rRNA. It has affinity for free ribosomal 30S subunits but not for 70S ribosomes. The sequence is that of Ribosome maturation factor RimM from Histophilus somni (strain 129Pt) (Haemophilus somnus).